The sequence spans 131 residues: Sec-independent protein translocase protein TatB (131 aa).

A helical transmembrane segment spans residues Phe-2–Gly-22. Polar residues-rich tracts occupy residues Glu-68 to Ile-83 and Ala-116 to Gly-131. Residues Glu-68–Gly-131 form a disordered region.

The protein belongs to the TatB family. As to quaternary structure, the Tat system comprises two distinct complexes: a TatABC complex, containing multiple copies of TatA, TatB and TatC subunits, and a separate TatA complex, containing only TatA subunits. Substrates initially bind to the TatABC complex, which probably triggers association of the separate TatA complex to form the active translocon.

It localises to the cell inner membrane. Its function is as follows. Part of the twin-arginine translocation (Tat) system that transports large folded proteins containing a characteristic twin-arginine motif in their signal peptide across membranes. Together with TatC, TatB is part of a receptor directly interacting with Tat signal peptides. TatB may form an oligomeric binding site that transiently accommodates folded Tat precursor proteins before their translocation. The sequence is that of Sec-independent protein translocase protein TatB from Shewanella pealeana (strain ATCC 700345 / ANG-SQ1).